The primary structure comprises 126 residues: LWamide neuropeptides (126 aa).

The propeptide at 1–2 is 1; the sequence is KR. Positions 1–126 are disordered; it reads KRQQPGLWGR…KSAIPKAKPQ (126 aa). Position 8 is a tryptophan amide (tryptophan 8). Positions 11–15 are cleaved as a propeptide — 2; that stretch reads SADPQ. Tryptophan 20 and tryptophan 29 each carry tryptophan amide. Positions 32-36 are cleaved as a propeptide — 2; sequence SADPQ. 2 positions are modified to tryptophan amide: tryptophan 41 and tryptophan 50. Residues 53 to 57 constitute a propeptide, 2; that stretch reads SADPQ. 2 positions are modified to tryptophan amide: tryptophan 62 and tryptophan 71. Residues 74–78 constitute a propeptide, 2; that stretch reads SADPQ. Tryptophan 83 is subject to Tryptophan amide. The propeptide at 86–93 is 3; the sequence is SAGSGKRQ. Tryptophan amide is present on tryptophan 99. Residues 102–126 constitute a propeptide, 4; it reads SAEPPQYKELEDLKQKSAIPKAKPQ. Basic and acidic residues predominate over residues 107-116; sequence QYKELEDLKQ.

This sequence belongs to the LWamide neuropeptide family.

It localises to the secreted. Its function is as follows. Metamorphosin A may be part of an internal signaling system involved in control of metamorphosis. The sequence is that of LWamide neuropeptides from Anemonia sulcata (Mediterranean snakelocks sea anemone).